Reading from the N-terminus, the 183-residue chain is MFNLPYHCKALLTAKQERGLTFDDVAKAINKPEVWTTALFYGQASTDKSTAEAILKALGGEQFWTDYNDRLEAGQEKIDIRRVLNGLSGNGEENMGVKGMVTRGATFEVPPKDPVLYRLYEVLVVYGYSYKALIYEKFGDGIMSAIDFRTSLERKKDPKGDRVVITMDGKFLPYSDPSAWGTQ.

Catalysis depends on residues Arg118, Glu121, and Ser144.

Belongs to the cyanase family.

It carries out the reaction cyanate + hydrogencarbonate + 3 H(+) = NH4(+) + 2 CO2. In terms of biological role, catalyzes the reaction of cyanate with bicarbonate to produce ammonia and carbon dioxide. This Cryptococcus neoformans var. neoformans serotype D (strain B-3501A) (Filobasidiella neoformans) protein is Cyanate hydratase.